The chain runs to 155 residues: 6,7-dimethyl-8-ribityllumazine synthase (155 aa).

5-amino-6-(D-ribitylamino)uracil is bound by residues Phe23, 57–59, and 81–83; these read AFE and AVI. Position 86–87 (86–87) interacts with (2S)-2-hydroxy-3-oxobutyl phosphate; that stretch reads ST. His89 functions as the Proton donor in the catalytic mechanism. Phe114 serves as a coordination point for 5-amino-6-(D-ribitylamino)uracil. Residue Arg128 participates in (2S)-2-hydroxy-3-oxobutyl phosphate binding.

It belongs to the DMRL synthase family.

It catalyses the reaction (2S)-2-hydroxy-3-oxobutyl phosphate + 5-amino-6-(D-ribitylamino)uracil = 6,7-dimethyl-8-(1-D-ribityl)lumazine + phosphate + 2 H2O + H(+). Its pathway is cofactor biosynthesis; riboflavin biosynthesis; riboflavin from 2-hydroxy-3-oxobutyl phosphate and 5-amino-6-(D-ribitylamino)uracil: step 1/2. Its function is as follows. Catalyzes the formation of 6,7-dimethyl-8-ribityllumazine by condensation of 5-amino-6-(D-ribitylamino)uracil with 3,4-dihydroxy-2-butanone 4-phosphate. This is the penultimate step in the biosynthesis of riboflavin. The protein is 6,7-dimethyl-8-ribityllumazine synthase of Dehalococcoides mccartyi (strain ATCC BAA-2266 / KCTC 15142 / 195) (Dehalococcoides ethenogenes (strain 195)).